Here is a 328-residue protein sequence, read N- to C-terminus: Methionyl-tRNA formyltransferase (328 aa).

Serine 110–proline 113 is a (6S)-5,6,7,8-tetrahydrofolate binding site.

The protein belongs to the Fmt family.

It catalyses the reaction L-methionyl-tRNA(fMet) + (6R)-10-formyltetrahydrofolate = N-formyl-L-methionyl-tRNA(fMet) + (6S)-5,6,7,8-tetrahydrofolate + H(+). In terms of biological role, attaches a formyl group to the free amino group of methionyl-tRNA(fMet). The formyl group appears to play a dual role in the initiator identity of N-formylmethionyl-tRNA by promoting its recognition by IF2 and preventing the misappropriation of this tRNA by the elongation apparatus. The chain is Methionyl-tRNA formyltransferase from Prochlorococcus marinus (strain MIT 9312).